The chain runs to 227 residues: Lipoprotein-releasing system ATP-binding protein LolD (227 aa).

The ABC transporter domain occupies 7 to 227 (LSCRDLGKSY…HLQEGHLVAI (221 aa)). 43–50 (GTSGSGKS) provides a ligand contact to ATP.

This sequence belongs to the ABC transporter superfamily. Lipoprotein translocase (TC 3.A.1.125) family. As to quaternary structure, the complex is composed of two ATP-binding proteins (LolD) and two transmembrane proteins (LolC and LolE).

The protein localises to the cell inner membrane. In terms of biological role, part of the ABC transporter complex LolCDE involved in the translocation of mature outer membrane-directed lipoproteins, from the inner membrane to the periplasmic chaperone, LolA. Responsible for the formation of the LolA-lipoprotein complex in an ATP-dependent manner. The polypeptide is Lipoprotein-releasing system ATP-binding protein LolD (Pseudomonas fluorescens (strain ATCC BAA-477 / NRRL B-23932 / Pf-5)).